We begin with the raw amino-acid sequence, 190 residues long: GTP cyclohydrolase 1 (190 aa).

Zn(2+) is bound by residues C75, H78, and C146.

Belongs to the GTP cyclohydrolase I family. In terms of assembly, homomer.

The catalysed reaction is GTP + H2O = 7,8-dihydroneopterin 3'-triphosphate + formate + H(+). Its pathway is cofactor biosynthesis; 7,8-dihydroneopterin triphosphate biosynthesis; 7,8-dihydroneopterin triphosphate from GTP: step 1/1. This chain is GTP cyclohydrolase 1, found in Campylobacter concisus (strain 13826).